Consider the following 337-residue polypeptide: Probable cytosolic iron-sulfur protein assembly protein 1 (337 aa).

WD repeat units follow at residues 11-50, 57-96, 109-148, 155-194, 199-240, 252-290, and 301-337; these read LHND…ENLL, VHKK…LEEG, GHEN…EEYE, EHSQ…WECA, GHEG…EDDQ, AHRS…SEVS, and AHTV…NYQD.

This sequence belongs to the WD repeat CIA1 family. As to quaternary structure, interacts with NAR1.

The protein resides in the cytoplasm. The protein localises to the nucleus. Essential component of the cytosolic iron-sulfur (Fe/S) protein assembly machinery. Required for the maturation of extramitochondrial Fe/S proteins. This Candida glabrata (strain ATCC 2001 / BCRC 20586 / JCM 3761 / NBRC 0622 / NRRL Y-65 / CBS 138) (Yeast) protein is Probable cytosolic iron-sulfur protein assembly protein 1.